Here is a 285-residue protein sequence, read N- to C-terminus: Polyamine aminopropyltransferase (285 aa).

A PABS domain is found at 5 to 241 (DSWFTEHFQA…GWWSVTLSSK (237 aa)). S-methyl-5'-thioadenosine is bound at residue Q35. Spermidine-binding residues include H66 and D90. Residues D110 and 141 to 142 (DG) contribute to the S-methyl-5'-thioadenosine site. Residue D160 is the Proton acceptor of the active site. 160-163 (DSTD) contacts spermidine. P167 serves as a coordination point for S-methyl-5'-thioadenosine.

Belongs to the spermidine/spermine synthase family. In terms of assembly, homodimer or homotetramer.

It localises to the cytoplasm. It catalyses the reaction S-adenosyl 3-(methylsulfanyl)propylamine + putrescine = S-methyl-5'-thioadenosine + spermidine + H(+). Its pathway is amine and polyamine biosynthesis; spermidine biosynthesis; spermidine from putrescine: step 1/1. Catalyzes the irreversible transfer of a propylamine group from the amino donor S-adenosylmethioninamine (decarboxy-AdoMet) to putrescine (1,4-diaminobutane) to yield spermidine. The chain is Polyamine aminopropyltransferase from Xylella fastidiosa (strain 9a5c).